The following is a 441-amino-acid chain: MSEMTPREIVHELDAHIIGQNKAKRAVAVALRNRWRRMQLAPDLRQEVTPKNILMIGPTGVGKTEIARRLAKLANAPFIKVEATKFTEVGYVGKEVEQIIRDLTDSAVKMTREQQMKKCRFRAEELAEERILDALLPKAKEDWDSEKKDDSGTRQIFRKKLREGQLDDKEIDIDIAAPQIGVEIMAPPGMEEMTNQLQGLFQNLGQSTSKRKKLKIKDAFKQLIEDEAAKLVNQEDLKEQAIDLVEQNGIVFLDEIDKICKRGETSGPDVSREGVQRDLLPLVEGCTVSTKHGMVKTDHILFIASGAFQMSKPSDLIPELQGRLPIRVELDPLTANDFKRILTEPNASLTEQYIALMATEGVTISFLESGIDKLAEAAWQVNERTENIGARRLHTVMEKLMEDISFDASDKSGSAFVIDADYVTEHLDTLVQDEDLSRFIL.

ATP contacts are provided by residues Ile18, Gly60 to Glu65, Asp254, Glu319, and Arg391.

Belongs to the ClpX chaperone family. HslU subfamily. In terms of assembly, a double ring-shaped homohexamer of HslV is capped on each side by a ring-shaped HslU homohexamer. The assembly of the HslU/HslV complex is dependent on binding of ATP.

It is found in the cytoplasm. In terms of biological role, ATPase subunit of a proteasome-like degradation complex; this subunit has chaperone activity. The binding of ATP and its subsequent hydrolysis by HslU are essential for unfolding of protein substrates subsequently hydrolyzed by HslV. HslU recognizes the N-terminal part of its protein substrates and unfolds these before they are guided to HslV for hydrolysis. This chain is ATP-dependent protease ATPase subunit HslU, found in Shewanella denitrificans (strain OS217 / ATCC BAA-1090 / DSM 15013).